The sequence spans 202 residues: Imidazoleglycerol-phosphate dehydratase (202 aa).

It belongs to the imidazoleglycerol-phosphate dehydratase family.

The protein resides in the cytoplasm. It catalyses the reaction D-erythro-1-(imidazol-4-yl)glycerol 3-phosphate = 3-(imidazol-4-yl)-2-oxopropyl phosphate + H2O. It functions in the pathway amino-acid biosynthesis; L-histidine biosynthesis; L-histidine from 5-phospho-alpha-D-ribose 1-diphosphate: step 6/9. This chain is Imidazoleglycerol-phosphate dehydratase, found in Lactococcus lactis subsp. cremoris (strain SK11).